The sequence spans 204 residues: MSRGALIVFEGLDKSGKTTQCMNIMESIPSNTIKYLNFPQRSTVTGKMIDDYLTRKKTYNDHIVNLLFCANRWEFASFIQEQLEQGITLIVDRYAFSGVAYAAAKGAPMTLSKSYESGLPKPDLVIFLESGSKEINRNVGEEIYEDVEFQQKVLQEYKKMIEEGDIHWQIISSEFEEDVKKELIKNIVIEAMHTVTGPVGQLWM.

ATP is bound at residue 11 to 18 (GLDKSGKT).

The protein belongs to the thymidylate kinase family.

The enzyme catalyses dTMP + ATP = dTDP + ADP. It participates in pyrimidine metabolism; dTTP biosynthesis. The polypeptide is Thymidylate kinase (TMK) (Ectromelia virus (strain Moscow) (ECTV)).